The primary structure comprises 219 residues: 3,4-dihydroxy-2-butanone 4-phosphate synthase (219 aa).

D-ribulose 5-phosphate contacts are provided by residues 37–38 (RE), Asp42, 150–154 (RRGHT), and Glu174. A Mg(2+)-binding site is contributed by Glu38. Position 153 (His153) interacts with Mg(2+).

This sequence belongs to the DHBP synthase family. Homodimer. Mg(2+) is required as a cofactor. Mn(2+) serves as cofactor.

The enzyme catalyses D-ribulose 5-phosphate = (2S)-2-hydroxy-3-oxobutyl phosphate + formate + H(+). It participates in cofactor biosynthesis; riboflavin biosynthesis; 2-hydroxy-3-oxobutyl phosphate from D-ribulose 5-phosphate: step 1/1. In terms of biological role, catalyzes the conversion of D-ribulose 5-phosphate to formate and 3,4-dihydroxy-2-butanone 4-phosphate. In Edwardsiella ictaluri (strain 93-146), this protein is 3,4-dihydroxy-2-butanone 4-phosphate synthase.